Consider the following 1370-residue polypeptide: Putative surface protein SA2285 (1370 aa).

A signal peptide spans 1–50; it reads MRDKKGPVNKRVDFLSNKLNKYSIRKFTVGTASILIGSLMYLGTQQEAEA. Disordered regions lie at residues 77–116, 439–472, and 495–1344; these read NKDTAPQGVEAKSEVTSNKDTIEHEASVKAEDISKKEDTP, KFNPDLAPGTEKVTREGQKGEKTITTPTLKNPLT, and EYGP…TGLE. 24 stretches are compositionally biased toward basic and acidic residues: residues 96–116, 450–460, 504–522, 553–569, 578–588, 605–618, 632–650, 681–697, 706–716, 733–746, 760–778, 809–825, 834–844, 861–874, 888–906, 937–953, 962–972, 989–1002, 1016–1034, 1065–1081, 1090–1100, 1117–1130, 1174–1185, and 1202–1221; these read DTIEHEASVKAEDISKKEDTP, KVTREGQKGEK, GHRDEFDPKLPTGEKEEVP, SIVEKEEIPFEKERKFN, SKGESKEEITKDPI, SIVEKEEIPFKKERKFN, SKGESKEEITKDPV, KVIEEPVDDVIK, and FETKREFNPKLQPGEERVKQ. Positions 418 to 500 constitute a G5 1 domain; it reads SAKNNNRIRK…NELTEYGPET (83 aa). The G5 2 domain maps to 546 to 628; it reads YGPVKGDSIV…NELTEYGPET (83 aa). The region spanning 674 to 756 is the G5 3 domain; the sequence is YGPVKGDSIV…NELTEYGPET (83 aa). In terms of domain architecture, G5 4 spans 802 to 884; the sequence is YGPVKGDSIV…NELTEYGPET (83 aa). The region spanning 930–1012 is the G5 5 domain; sequence YGPVKGDSIV…NELTEYGPET (83 aa). One can recognise a G5 6 domain in the interval 1058–1140; that stretch reads YGPVKGDSIV…NELTEFGGEK (83 aa). A G5 7 domain is found at 1186-1268; that stretch reads HGPKTGTPET…DKIVEFGGEK (83 aa). Positions 1224 to 1238 are enriched in polar residues; it reads QPGSKTITTPITVNP. The segment covering 1252-1282 has biased composition (basic and acidic residues); it reads EITKQPVDKIVEFGGEKPKDPKGPENPEKPS. Positions 1338 to 1342 match the LPXTG sorting signal motif; it reads LPKTG. Residue T1341 is modified to Pentaglycyl murein peptidoglycan amidated threonine. Residues 1342–1370 constitute a propeptide, removed by sortase; the sequence is GLESTQKGLIFSSIIGIAGLMLLARRRKN.

It is found in the secreted. The protein localises to the cell wall. In Staphylococcus aureus (strain N315), this protein is Putative surface protein SA2285.